The primary structure comprises 143 residues: Cell division protein SepF (143 aa).

This sequence belongs to the SepF family. In terms of assembly, homodimer. Interacts with FtsZ.

The protein resides in the cytoplasm. In terms of biological role, cell division protein that is part of the divisome complex and is recruited early to the Z-ring. Probably stimulates Z-ring formation, perhaps through the cross-linking of FtsZ protofilaments. Its function overlaps with FtsA. The polypeptide is Cell division protein SepF (Geobacillus thermodenitrificans (strain NG80-2)).